Reading from the N-terminus, the 619-residue chain is 4-hydroxyphenylalkanoate adenylyltransferase (619 aa).

The protein belongs to the ATP-dependent AMP-binding enzyme family.

It carries out the reaction 17-(4-hydroxyphenyl)heptadecanoate + holo-[(phenol)carboxyphthiodiolenone synthase] + ATP = 17-(4-hydroxyphenyl)heptadecanoyl-[(phenol)carboxyphthiodiolenone synthase] + AMP + diphosphate. The enzyme catalyses 19-(4-hydroxyphenyl)nonadecanoate + holo-[(phenol)carboxyphthiodiolenone synthase] + ATP = 19-(4-hydroxyphenyl)nonadecanoyl-[(phenol)carboxyphthiodiolenone synthase] + AMP + diphosphate. The catalysed reaction is dodecanoate + ATP + H(+) = dodecanoyl-AMP + diphosphate. It functions in the pathway lipid metabolism; fatty acid biosynthesis. Its function is as follows. Catalyzes the activation of long-chain fatty acids as acyl-adenylates (acyl-AMP), which are then transferred to the multifunctional polyketide synthase PpsA for further chain extension. Involved in the biosynthesis of phenolphthiocerol, which is an important intermediate in the biosynthesis of phenolic glycolipid (PGL), also called mycosid B. The sequence is that of 4-hydroxyphenylalkanoate adenylyltransferase (fadD29) from Mycobacterium tuberculosis (strain ATCC 25618 / H37Rv).